A 63-amino-acid chain; its full sequence is Large ribosomal subunit protein uL30 (63 aa).

The protein belongs to the universal ribosomal protein uL30 family. As to quaternary structure, part of the 50S ribosomal subunit.

In Xylella fastidiosa (strain M23), this protein is Large ribosomal subunit protein uL30.